Reading from the N-terminus, the 88-residue chain is Small cysteine-rich outer membrane protein OmcA (88 aa).

The N-terminal stretch at 1–18 (MKKTALLAALCSVVSLSS) is a signal peptide. C19 carries the N-palmitoyl cysteine lipid modification. A lipid anchor (S-diacylglycerol cysteine) is attached at C19. Residues 67–88 (THQDAEHGPQAREIPVDGKCRQ) form a disordered region.

As to quaternary structure, part of a disulfide cross-linked outer membrane complex (COMC) composed of the major outer membrane porin (MOMP), the small cysteine-rich protein (OmcA) and the large cysteine-rich periplasmic protein (OmcB).

It localises to the cell outer membrane. In elementary bodies (EBs, the infectious stage, which is able to survive outside the host cell) provides the structural integrity of the outer envelope through disulfide cross-links with the large cysteine-rich periplasmic protein and the major outer membrane porin. It has been described in publications as the Sarkosyl-insoluble COMC (Chlamydia outer membrane complex), and serves as the functional equivalent of peptidoglycan. The polypeptide is Small cysteine-rich outer membrane protein OmcA (omcA) (Chlamydia trachomatis serovar L2 (strain ATCC VR-902B / DSM 19102 / 434/Bu)).